Reading from the N-terminus, the 953-residue chain is Protein translocase subunit SecA (953 aa).

Residues Q84, G102–T106, and D491 contribute to the ATP site. A disordered region spans residues E832 to R953. A compositionally biased stretch (low complexity) spans S841–A865. Positions K898–R907 are enriched in basic and acidic residues. Residues L908–S934 are compositionally biased toward polar residues. Positions R940–R953 are enriched in basic and acidic residues.

The protein belongs to the SecA family. In terms of assembly, monomer and homodimer. Part of the essential Sec protein translocation apparatus which comprises SecA, SecYEG and auxiliary proteins SecDF. Other proteins may also be involved.

The protein localises to the cell membrane. It is found in the cytoplasm. The catalysed reaction is ATP + H2O + cellular proteinSide 1 = ADP + phosphate + cellular proteinSide 2.. In terms of biological role, part of the Sec protein translocase complex. Interacts with the SecYEG preprotein conducting channel. Has a central role in coupling the hydrolysis of ATP to the transfer of proteins into and across the cell membrane, serving as an ATP-driven molecular motor driving the stepwise translocation of polypeptide chains across the membrane. The polypeptide is Protein translocase subunit SecA (Saccharopolyspora erythraea (strain ATCC 11635 / DSM 40517 / JCM 4748 / NBRC 13426 / NCIMB 8594 / NRRL 2338)).